The sequence spans 402 residues: Succinylornithine transaminase (402 aa).

Lys252 is modified (N6-(pyridoxal phosphate)lysine).

The protein belongs to the class-III pyridoxal-phosphate-dependent aminotransferase family. AstC subfamily. The cofactor is pyridoxal 5'-phosphate.

The enzyme catalyses N(2)-succinyl-L-ornithine + 2-oxoglutarate = N-succinyl-L-glutamate 5-semialdehyde + L-glutamate. It functions in the pathway amino-acid degradation; L-arginine degradation via AST pathway; L-glutamate and succinate from L-arginine: step 3/5. Its function is as follows. Catalyzes the transamination of N(2)-succinylornithine and alpha-ketoglutarate into N(2)-succinylglutamate semialdehyde and glutamate. Can also act as an acetylornithine aminotransferase. This is Succinylornithine transaminase from Photorhabdus laumondii subsp. laumondii (strain DSM 15139 / CIP 105565 / TT01) (Photorhabdus luminescens subsp. laumondii).